The chain runs to 144 residues: D-aminoacyl-tRNA deacylase (144 aa).

The Gly-cisPro motif, important for rejection of L-amino acids signature appears at 136–137 (GP).

The protein belongs to the DTD family. Homodimer.

Its subcellular location is the cytoplasm. It carries out the reaction glycyl-tRNA(Ala) + H2O = tRNA(Ala) + glycine + H(+). The enzyme catalyses a D-aminoacyl-tRNA + H2O = a tRNA + a D-alpha-amino acid + H(+). Its function is as follows. An aminoacyl-tRNA editing enzyme that deacylates mischarged D-aminoacyl-tRNAs. Also deacylates mischarged glycyl-tRNA(Ala), protecting cells against glycine mischarging by AlaRS. Acts via tRNA-based rather than protein-based catalysis; rejects L-amino acids rather than detecting D-amino acids in the active site. By recycling D-aminoacyl-tRNA to D-amino acids and free tRNA molecules, this enzyme counteracts the toxicity associated with the formation of D-aminoacyl-tRNA entities in vivo and helps enforce protein L-homochirality. The polypeptide is D-aminoacyl-tRNA deacylase (Haemophilus ducreyi (strain 35000HP / ATCC 700724)).